A 301-amino-acid polypeptide reads, in one-letter code: tRNA dimethylallyltransferase (301 aa).

An ATP-binding site is contributed by 10–17 (GATATGKT). 12 to 17 (TATGKT) contacts substrate. Residues 35–38 (DSRQ) are interaction with substrate tRNA.

It belongs to the IPP transferase family. In terms of assembly, monomer. Mg(2+) is required as a cofactor.

The catalysed reaction is adenosine(37) in tRNA + dimethylallyl diphosphate = N(6)-dimethylallyladenosine(37) in tRNA + diphosphate. In terms of biological role, catalyzes the transfer of a dimethylallyl group onto the adenine at position 37 in tRNAs that read codons beginning with uridine, leading to the formation of N6-(dimethylallyl)adenosine (i(6)A). The protein is tRNA dimethylallyltransferase of Crocosphaera subtropica (strain ATCC 51142 / BH68) (Cyanothece sp. (strain ATCC 51142)).